A 534-amino-acid polypeptide reads, in one-letter code: Beta-glucosidase 32 (534 aa).

The first 22 residues, 1-22, serve as a signal peptide directing secretion; the sequence is MAIKLIALVITICVASWDSAQG. Glutamine 51 is an a beta-D-glucoside binding site. Residue asparagine 68 is glycosylated (N-linked (GlcNAc...) asparagine). Residues histidine 154 and 199–200 contribute to the a beta-D-glucoside site; that span reads NE. Glutamate 200 functions as the Proton donor in the catalytic mechanism. Cysteine 219 and cysteine 227 are joined by a disulfide. Tyrosine 344 provides a ligand contact to a beta-D-glucoside. N-linked (GlcNAc...) asparagine glycosylation is present at asparagine 374. Residue glutamate 417 participates in a beta-D-glucoside binding. Catalysis depends on glutamate 417, which acts as the Nucleophile. N-linked (GlcNAc...) asparagine glycosylation occurs at asparagine 425. Residues tryptophan 467, 474-475, and phenylalanine 483 contribute to the a beta-D-glucoside site; that span reads EW.

The protein belongs to the glycosyl hydrolase 1 family.

It catalyses the reaction Hydrolysis of terminal, non-reducing beta-D-glucosyl residues with release of beta-D-glucose.. The sequence is that of Beta-glucosidase 32 from Arabidopsis thaliana (Mouse-ear cress).